The sequence spans 412 residues: Multifunctional CCA protein (412 aa).

ATP is bound by residues Gly-8 and Arg-11. CTP contacts are provided by Gly-8 and Arg-11. Residues Asp-21 and Asp-23 each contribute to the Mg(2+) site. ATP contacts are provided by Arg-91, Arg-137, and Arg-140. The CTP site is built by Arg-91, Arg-137, and Arg-140. The HD domain occupies 228–329 (TGIHTLMTLS…VKLFDSIDAW (102 aa)).

This sequence belongs to the tRNA nucleotidyltransferase/poly(A) polymerase family. Bacterial CCA-adding enzyme type 1 subfamily. As to quaternary structure, monomer. Can also form homodimers and oligomers. Mg(2+) is required as a cofactor. Ni(2+) serves as cofactor.

The catalysed reaction is a tRNA precursor + 2 CTP + ATP = a tRNA with a 3' CCA end + 3 diphosphate. It carries out the reaction a tRNA with a 3' CCA end + 2 CTP + ATP = a tRNA with a 3' CCACCA end + 3 diphosphate. In terms of biological role, catalyzes the addition and repair of the essential 3'-terminal CCA sequence in tRNAs without using a nucleic acid template. Adds these three nucleotides in the order of C, C, and A to the tRNA nucleotide-73, using CTP and ATP as substrates and producing inorganic pyrophosphate. tRNA 3'-terminal CCA addition is required both for tRNA processing and repair. Also involved in tRNA surveillance by mediating tandem CCA addition to generate a CCACCA at the 3' terminus of unstable tRNAs. While stable tRNAs receive only 3'-terminal CCA, unstable tRNAs are marked with CCACCA and rapidly degraded. The polypeptide is Multifunctional CCA protein (Shigella sonnei (strain Ss046)).